Consider the following 870-residue polypeptide: Radial spoke head 10 homolog B (870 aa).

Basic and acidic residues predominate over residues 1-16 (MVKEKKKADKKGEKSA). A disordered region spans residues 1-43 (MVKEKKKADKKGEKSARSPSSLSDNLDFSKQDGNTTRQEMSPA). The segment covering 17–39 (RSPSSLSDNLDFSKQDGNTTRQE) has biased composition (polar residues). MORN repeat units lie at residues 86 to 108 (YEGE…GGCT), 109 to 131 (YRGM…DGLK), 132 to 154 (YEGD…DGSM), 155 to 177 (YEGE…TQPV), 179 to 201 (YIGH…QEGT), 204 to 226 (YEGD…SGNI), 227 to 249 (YEGQ…TTNE), 251 to 273 (YTGR…LKRI), 284 to 306 (YIGE…SGAM), and 307 to 329 (YDGE…NGRV). The segment at 674–704 (NKSPSAVMSHESDAAHSDSARSSSSKLELSP) is disordered. Positions 683-692 (HESDAAHSDS) are enriched in basic and acidic residues. A compositionally biased stretch (low complexity) spans 693 to 703 (ARSSSSKLELS). The stretch at 784-811 (KEKIRADRLRSTAQAQQRKMEDDELEAR) forms a coiled coil. Residues 840–870 (VSSSHLILDPPKEDVTVSPSSKTITSKKKKK) are disordered.

As to quaternary structure, interacts with RSPH6A. Does not appear to be part of the axonemal radial spoke complexes 1 or 2.

The protein localises to the cytoplasm. It is found in the cytoskeleton. The protein resides in the cilium axoneme. Its subcellular location is the cell projection. It localises to the cilium. The protein localises to the flagellum. In terms of biological role, may function as part of the axonemal radial spoke complex 3 (RS3). Radial spoke complexes are important for ciliary motility. The polypeptide is Radial spoke head 10 homolog B (RSPH10B) (Homo sapiens (Human)).